The primary structure comprises 1485 residues: Chromosome partition protein MukB (1485 aa).

34 to 41 (GGNGAGKS) serves as a coordination point for ATP. 2 coiled-coil regions span residues 337–480 (LNLV…QAYQ) and 509–605 (QHLA…PVWL). The tract at residues 666–783 (PSGAEDARLI…EVPLFGRAAR (118 aa)) is flexible hinge. Coiled coils occupy residues 835–915 (EAEI…IQQH) and 977–1116 (GMLT…AKAG).

Belongs to the SMC family. MukB subfamily. As to quaternary structure, homodimerization via its hinge domain. Binds to DNA via its C-terminal region. Interacts, and probably forms a ternary complex, with MukE and MukF via its C-terminal region. The complex formation is stimulated by calcium or magnesium. Interacts with tubulin-related protein FtsZ.

Its subcellular location is the cytoplasm. The protein localises to the nucleoid. Its function is as follows. Plays a central role in chromosome condensation, segregation and cell cycle progression. Functions as a homodimer, which is essential for chromosome partition. Involved in negative DNA supercoiling in vivo, and by this means organize and compact chromosomes. May achieve or facilitate chromosome segregation by condensation DNA from both sides of a centrally located replisome during cell division. The protein is Chromosome partition protein MukB of Yersinia pseudotuberculosis serotype O:3 (strain YPIII).